The chain runs to 761 residues: 1,4-alpha-glucan branching enzyme GlgB (761 aa).

The active-site Nucleophile is the Asp-431. Catalysis depends on Glu-484, which acts as the Proton donor.

Belongs to the glycosyl hydrolase 13 family. GlgB subfamily. As to quaternary structure, monomer.

It carries out the reaction Transfers a segment of a (1-&gt;4)-alpha-D-glucan chain to a primary hydroxy group in a similar glucan chain.. Its pathway is glycan biosynthesis; glycogen biosynthesis. Functionally, catalyzes the formation of the alpha-1,6-glucosidic linkages in glycogen by scission of a 1,4-alpha-linked oligosaccharide from growing alpha-1,4-glucan chains and the subsequent attachment of the oligosaccharide to the alpha-1,6 position. In Synechococcus sp. (strain WH7803), this protein is 1,4-alpha-glucan branching enzyme GlgB.